The primary structure comprises 243 residues: PHO85 cyclin-like protein psl1 (243 aa).

Positions 211–224 (ESPISHTPQQNQQD) are enriched in polar residues. The interval 211–231 (ESPISHTPQQNQQDEQPRRPI) is disordered.

This sequence belongs to the cyclin family. PHO80 subfamily. As to quaternary structure, forms a cyclin-CDK complex with pef1.

Its subcellular location is the cytoplasm. The protein localises to the nucleus. Functionally, cyclin partner of the cyclin-dependent kinase (CDK) pef1 (PHO85 homolog). This Schizosaccharomyces pombe (strain 972 / ATCC 24843) (Fission yeast) protein is PHO85 cyclin-like protein psl1 (psl1).